A 141-amino-acid chain; its full sequence is Hemoglobin subunit alpha (141 aa).

Positions 1–141 (VLSPADKTNV…VSTVLTSKYR (141 aa)) constitute a Globin domain. A Phosphoserine modification is found at Ser3. Lys7 carries the post-translational modification N6-succinyllysine. At Thr8 the chain carries Phosphothreonine. At Lys11 the chain carries N6-succinyllysine. An N6-acetyllysine; alternate modification is found at Lys16. Position 16 is an N6-succinyllysine; alternate (Lys16). A Phosphotyrosine modification is found at Tyr24. A Phosphoserine modification is found at Ser35. Lys40 carries the N6-succinyllysine modification. Ser49 is subject to Phosphoserine. Position 58 (His58) interacts with O2. Position 87 (His87) interacts with heme b. Ser102 carries the post-translational modification Phosphoserine. Position 108 is a phosphothreonine (Thr108). Phosphoserine is present on Ser124. Residues Thr134 and Thr137 each carry the phosphothreonine modification. The residue at position 138 (Ser138) is a Phosphoserine.

The protein belongs to the globin family. As to quaternary structure, heterotetramer of two alpha chains and two beta chains. As to expression, red blood cells.

In terms of biological role, involved in oxygen transport from the lung to the various peripheral tissues. Its function is as follows. Hemopressin acts as an antagonist peptide of the cannabinoid receptor CNR1. Hemopressin-binding efficiently blocks cannabinoid receptor CNR1 and subsequent signaling. This Pteronura brasiliensis (Giant otter) protein is Hemoglobin subunit alpha (HBA).